The sequence spans 46 residues: Iota-conotoxin-like M11.1 (46 aa).

4 disulfide bridges follow: Cys5–Cys19, Cys12–Cys22, Cys18–Cys27, and Cys21–Cys38. The residue at position 44 (Met44) is a D-methionine. Arg46 is a propeptide (removed by a carboxypeptidase).

This sequence belongs to the conotoxin I1 superfamily. Expressed by the venom duct.

It localises to the secreted. Its function is as follows. Iota-conotoxins bind to voltage-gated sodium channels (Nav) and act as agonists by shifting the voltage-dependence of activation to more hyperpolarized levels. Produces general excitatory symptoms. The protein is Iota-conotoxin-like M11.1 of Conus magus (Magical cone).